The chain runs to 743 residues: Phosphoribosylformylglycinamidine synthase subunit PurL (743 aa).

The active site involves H50. ATP contacts are provided by Y53 and K92. E94 serves as a coordination point for Mg(2+). Substrate is bound by residues 95–98 (SHNH) and R117. H96 serves as the catalytic Proton acceptor. D118 contacts Mg(2+). A substrate-binding site is contributed by Q241. D269 serves as a coordination point for Mg(2+). Substrate is bound at residue 313-315 (ESQ). D495 and G532 together coordinate ATP. Position 533 (N533) interacts with Mg(2+). S535 serves as a coordination point for substrate.

The protein belongs to the FGAMS family. In terms of assembly, monomer. Part of the FGAM synthase complex composed of 1 PurL, 1 PurQ and 2 PurS subunits.

The protein resides in the cytoplasm. It carries out the reaction N(2)-formyl-N(1)-(5-phospho-beta-D-ribosyl)glycinamide + L-glutamine + ATP + H2O = 2-formamido-N(1)-(5-O-phospho-beta-D-ribosyl)acetamidine + L-glutamate + ADP + phosphate + H(+). Its pathway is purine metabolism; IMP biosynthesis via de novo pathway; 5-amino-1-(5-phospho-D-ribosyl)imidazole from N(2)-formyl-N(1)-(5-phospho-D-ribosyl)glycinamide: step 1/2. Part of the phosphoribosylformylglycinamidine synthase complex involved in the purines biosynthetic pathway. Catalyzes the ATP-dependent conversion of formylglycinamide ribonucleotide (FGAR) and glutamine to yield formylglycinamidine ribonucleotide (FGAM) and glutamate. The FGAM synthase complex is composed of three subunits. PurQ produces an ammonia molecule by converting glutamine to glutamate. PurL transfers the ammonia molecule to FGAR to form FGAM in an ATP-dependent manner. PurS interacts with PurQ and PurL and is thought to assist in the transfer of the ammonia molecule from PurQ to PurL. The polypeptide is Phosphoribosylformylglycinamidine synthase subunit PurL (Rhizobium leguminosarum bv. trifolii (strain WSM2304)).